A 182-amino-acid chain; its full sequence is Molybdopterin synthase catalytic subunit (182 aa).

Substrate is bound by residues His-119 to Arg-120, Lys-135, and Lys-142 to Glu-144. Positions Val-152–Asp-182 are disordered.

The protein belongs to the MoaE family. MOCS2B subfamily. In terms of assembly, heterotetramer; composed of 2 small (MOCS2A) and 2 large (MOCS2B) subunits.

It localises to the cytoplasm. It catalyses the reaction 2 [molybdopterin-synthase sulfur-carrier protein]-C-terminal-Gly-aminoethanethioate + cyclic pyranopterin phosphate + H2O = molybdopterin + 2 [molybdopterin-synthase sulfur-carrier protein]-C-terminal Gly-Gly + 2 H(+). It participates in cofactor biosynthesis; molybdopterin biosynthesis. In terms of biological role, catalytic subunit of the molybdopterin synthase complex, a complex that catalyzes the conversion of precursor Z into molybdopterin. Acts by mediating the incorporation of 2 sulfur atoms from thiocarboxylated MOCS2A into precursor Z to generate a dithiolene group. This chain is Molybdopterin synthase catalytic subunit, found in Pyricularia oryzae (strain 70-15 / ATCC MYA-4617 / FGSC 8958) (Rice blast fungus).